The chain runs to 156 residues: Arginine repressor (156 aa).

The protein belongs to the ArgR family.

The protein localises to the cytoplasm. The protein operates within amino-acid biosynthesis; L-arginine biosynthesis [regulation]. Functionally, regulates arginine biosynthesis genes. This Shewanella piezotolerans (strain WP3 / JCM 13877) protein is Arginine repressor.